The sequence spans 148 residues: Large ribosomal subunit protein uL15 (148 aa).

Over residues 1–12 (MSDPIKLHDLRP) the composition is skewed to basic and acidic residues. Positions 1 to 45 (MSDPIKLHDLRPAKGANKAKTRVGRGEASKGKTAGRGTKGTKARN) are disordered.

The protein belongs to the universal ribosomal protein uL15 family. As to quaternary structure, part of the 50S ribosomal subunit.

Its function is as follows. Binds to the 23S rRNA. This is Large ribosomal subunit protein uL15 from Corynebacterium urealyticum (strain ATCC 43042 / DSM 7109).